The primary structure comprises 152 residues: AIG2-like protein D (152 aa).

Residue Tyr13–Ala18 coordinates substrate. The active-site Proton acceptor is Glu81.

It belongs to the gamma-glutamylcyclotransferase family. In terms of tissue distribution, expressed mainly in leaves.

Functionally, putative gamma-glutamylcyclotransferase. The chain is AIG2-like protein D from Arabidopsis thaliana (Mouse-ear cress).